A 464-amino-acid chain; its full sequence is Forkhead box protein N3 (464 aa).

2 disordered regions span residues 1–53 and 85–108; these read MGPI…EKGG and PVQD…DAKQ. Positions 14-30 are enriched in polar residues; sequence TGISVSSQCYRSSTLSN. A DNA-binding region (fork-head) is located at residues 113–209; the sequence is KPPYSFSCLI…QALKKTPYHP (97 aa). 2 disordered regions span residues 294–337 and 381–428; these read MESE…SSSA and LVES…MKEA. Low complexity predominate over residues 316–336; the sequence is SSAKSANKRSSSPSDSISSSS. Residues 389 to 401 show a composition bias toward basic residues; the sequence is QHKKKQHLLKLRR.

It is found in the nucleus. Its function is as follows. Acts as a transcriptional repressor. May be involved in DNA damage-inducible cell cycle arrests (checkpoints). This chain is Forkhead box protein N3, found in Xenopus tropicalis (Western clawed frog).